The chain runs to 169 residues: Transcription antitermination protein NusB (169 aa).

The protein belongs to the NusB family.

Involved in transcription antitermination. Required for transcription of ribosomal RNA (rRNA) genes. Binds specifically to the boxA antiterminator sequence of the ribosomal RNA (rrn) operons. The protein is Transcription antitermination protein NusB of Deinococcus geothermalis (strain DSM 11300 / CIP 105573 / AG-3a).